A 413-amino-acid chain; its full sequence is MNLASVLLLLAACHLSVSVNGQEHKEAIELSMANHDHVLGSAQVVFVAFCADWCPFSRRLKPIFEESARVFHQENPQASAVWAIVDSQRQADIGDKYFVNKYPTMKVFVNGELITKEYRSTRSVEALTNFVKFQLSTAINEFSSQDQLNQEMDKSKRNVVAWLKKDGPEFANLKKVASILREDCSFWVPTDHFGTQTNDNKLSFFDPDSNEEAKFTGNFNDYDFVKQWVTDKCIPLVREVTFENVEELTEEGMPFLIYFRDPDNKTTDKVFGEAVARELYDQRSAINPLLADGHKFAHPLKHLGKTKEDLPVLAIDSFQHMYLFPDMTQMNIPGKLREFVMDLHSGKLHKDFHENLDQRMIELAKAKAARGITDDHEAQAPSTRPIDTTPPPSVFKELKPSDKRYSILQKSEL.

The first 21 residues, 1 to 21 (MNLASVLLLLAACHLSVSVNG), serve as a signal peptide directing secretion. The Thioredoxin domain maps to 22–136 (QEHKEAIELS…LTNFVKFQLS (115 aa)). Cys-184 and Cys-233 are disulfide-bonded. Residue Asn-264 is glycosylated (N-linked (GlcNAc...) asparagine). The tract at residues 367-413 (KAARGITDDHEAQAPSTRPIDTTPPPSVFKELKPSDKRYSILQKSEL) is disordered. The span at 396 to 413 (KELKPSDKRYSILQKSEL) shows a compositional bias: basic and acidic residues. Residues 410–413 (KSEL) carry the Prevents secretion from ER motif.

The protein resides in the endoplasmic reticulum lumen. This chain is Endoplasmic reticulum resident protein 44.2, found in Caenorhabditis elegans.